The primary structure comprises 156 residues: Arginine repressor (156 aa).

This sequence belongs to the ArgR family.

The protein localises to the cytoplasm. Its pathway is amino-acid biosynthesis; L-arginine biosynthesis [regulation]. Its function is as follows. Regulates arginine biosynthesis genes. In Shewanella woodyi (strain ATCC 51908 / MS32), this protein is Arginine repressor.